The chain runs to 123 residues: PTS-dependent dihydroxyacetone kinase, phosphotransferase subunit DhaM (123 aa).

The region spanning 2 to 123 is the PTS EIIA type-4 domain; the sequence is TYGIVIVSHS…EQLEKMLIEK (122 aa). The active-site Tele-phosphohistidine intermediate; for EIIA activity is H10.

In terms of assembly, homodimer. The dihydroxyacetone kinase complex is composed of a homodimer of DhaM, a homodimer of DhaK and the subunit DhaL.

The enzyme catalyses dihydroxyacetone + phosphoenolpyruvate = dihydroxyacetone phosphate + pyruvate. It functions in the pathway polyol metabolism; glycerol degradation. Functionally, component of the dihydroxyacetone kinase complex, which is responsible for the phosphoenolpyruvate (PEP)-dependent phosphorylation of dihydroxyacetone. DhaM serves as the phosphoryl donor. Is phosphorylated by phosphoenolpyruvate in an EI- and HPr-dependent reaction, and a phosphorelay system on histidine residues finally leads to phosphoryl transfer to DhaL and dihydroxyacetone. This is PTS-dependent dihydroxyacetone kinase, phosphotransferase subunit DhaM from Lactococcus lactis subsp. lactis (strain IL1403) (Streptococcus lactis).